We begin with the raw amino-acid sequence, 318 residues long: Ribonuclease Z (318 aa).

Residues H62, H64, D66, H67, H140, D211, and H269 each coordinate Zn(2+). D66 acts as the Proton acceptor in catalysis.

It belongs to the RNase Z family. In terms of assembly, homodimer. Zn(2+) is required as a cofactor.

It carries out the reaction Endonucleolytic cleavage of RNA, removing extra 3' nucleotides from tRNA precursor, generating 3' termini of tRNAs. A 3'-hydroxy group is left at the tRNA terminus and a 5'-phosphoryl group is left at the trailer molecule.. Zinc phosphodiesterase, which displays some tRNA 3'-processing endonuclease activity. Probably involved in tRNA maturation, by removing a 3'-trailer from precursor tRNA. This Brevibacillus brevis (strain 47 / JCM 6285 / NBRC 100599) protein is Ribonuclease Z.